The sequence spans 78 residues: MARKPVELDFESTLAQLEAVVTELERGDLPLESALKEFETGIKLAKQGQERLQQAEQRIQILLQKSDTAPLTDYSADE.

This sequence belongs to the XseB family. In terms of assembly, heterooligomer composed of large and small subunits.

Its subcellular location is the cytoplasm. The enzyme catalyses Exonucleolytic cleavage in either 5'- to 3'- or 3'- to 5'-direction to yield nucleoside 5'-phosphates.. In terms of biological role, bidirectionally degrades single-stranded DNA into large acid-insoluble oligonucleotides, which are then degraded further into small acid-soluble oligonucleotides. This chain is Exodeoxyribonuclease 7 small subunit, found in Actinobacillus succinogenes (strain ATCC 55618 / DSM 22257 / CCUG 43843 / 130Z).